Here is a 449-residue protein sequence, read N- to C-terminus: Glycoprotein endo-alpha-1,2-mannosidase (449 aa).

The Cytoplasmic portion of the chain corresponds to 1–8; sequence MIRFRRRT. A helical; Signal-anchor for type II membrane protein transmembrane segment spans residues 9 to 29; it reads CITLSIFIFLVCLIMAGLKHL. The Lumenal portion of the chain corresponds to 30 to 449; it reads RPENAAFGSP…YMKEKEHWLV (420 aa). A catalytic region spans residues 59-449; sequence DSENHLKGNT…YMKEKEHWLV (391 aa).

The protein belongs to the glycosyl hydrolase 99 family.

The protein localises to the golgi apparatus membrane. It carries out the reaction N-{alpha-Glc-(1-&gt;3)-alpha-Man-(1-&gt;2)-alpha-Man-(1-&gt;2)-alpha-Man-(1-&gt;3)-[alpha-Man-(1-&gt;2)-alpha-Man-(1-&gt;3)-[alpha-Man-(1-&gt;2)-alpha-Man-(1-&gt;6)]-alpha-Man-(1-&gt;6)]-beta-Man-(1-&gt;4)-beta-GlcNAc-(1-&gt;4)-beta-GlcNAc}-L-asparaginyl-[protein] + H2O = alpha-D-glucosyl-(1-&gt;3)-D-mannopyranose + N(4)-{alpha-D-Man-(1-&gt;2)-alpha-D-Man-(1-&gt;3)-[alpha-D-Man-(1-&gt;2)-alpha-D-Man-(1-&gt;3)-[alpha-D-Man-(1-&gt;2)-alpha-D-Man-(1-&gt;6)]-alpha-D-Man-(1-&gt;6)]-beta-D-Man-(1-&gt;4)-beta-D-GlaNAc-(1-&gt;4)-beta-D-GlcNAc}-L-asparaginyl-[protein] (N-glucan mannose isomer 8A1,2,3B1,2). This Xenopus laevis (African clawed frog) protein is Glycoprotein endo-alpha-1,2-mannosidase (manea).